A 366-amino-acid chain; its full sequence is A-type ATP synthase subunit C (366 aa).

Belongs to the V-ATPase V0D/AC39 subunit family. As to quaternary structure, has multiple subunits with at least A(3), B(3), C, D, E, F, H, I and proteolipid K(x).

Its subcellular location is the cell membrane. Functionally, component of the A-type ATP synthase that produces ATP from ADP in the presence of a proton gradient across the membrane. This Thermococcus onnurineus (strain NA1) protein is A-type ATP synthase subunit C.